The following is a 310-amino-acid chain: HPr kinase/phosphorylase (310 aa).

Catalysis depends on residues His138 and Lys159. 153 to 160 (GKSGVGKS) is an ATP binding site. Mg(2+) is bound at residue Ser160. Asp177 serves as the catalytic Proton acceptor; for phosphorylation activity. Proton donor; for dephosphorylation activity. The important for the catalytic mechanism of both phosphorylation and dephosphorylation stretch occupies residues 201 to 210 (LEIRGLGIIN). Position 202 (Glu202) interacts with Mg(2+). The active site involves Arg243. Positions 264-269 (PVRPGR) are important for the catalytic mechanism of dephosphorylation.

It belongs to the HPrK/P family. Homohexamer. It depends on Mg(2+) as a cofactor.

The catalysed reaction is [HPr protein]-L-serine + ATP = [HPr protein]-O-phospho-L-serine + ADP + H(+). It catalyses the reaction [HPr protein]-O-phospho-L-serine + phosphate + H(+) = [HPr protein]-L-serine + diphosphate. Functionally, catalyzes the ATP- as well as the pyrophosphate-dependent phosphorylation of a specific serine residue in HPr, a phosphocarrier protein of the phosphoenolpyruvate-dependent sugar phosphotransferase system (PTS). HprK/P also catalyzes the pyrophosphate-producing, inorganic phosphate-dependent dephosphorylation (phosphorolysis) of seryl-phosphorylated HPr (P-Ser-HPr). The two antagonistic activities of HprK/P are regulated by several intracellular metabolites, which change their concentration in response to the absence or presence of rapidly metabolisable carbon sources (glucose, fructose, etc.) in the growth medium. Also phosphorylates/dephosphorylates the HPr-like catabolite repression protein crh on a specific serine residue. Therefore, by controlling the phosphorylation state of HPr and crh, HPrK/P is a sensor enzyme that plays a major role in the regulation of carbon metabolism and sugar transport: it mediates carbon catabolite repression (CCR), and regulates PTS-catalyzed carbohydrate uptake and inducer exclusion. The polypeptide is HPr kinase/phosphorylase (Bacillus pumilus (strain SAFR-032)).